The following is a 126-amino-acid chain: Urease subunit beta (126 aa).

It belongs to the urease beta subunit family. In terms of assembly, heterotrimer of UreA (gamma), UreB (beta) and UreC (alpha) subunits. Three heterotrimers associate to form the active enzyme.

It localises to the cytoplasm. It carries out the reaction urea + 2 H2O + H(+) = hydrogencarbonate + 2 NH4(+). The protein operates within nitrogen metabolism; urea degradation; CO(2) and NH(3) from urea (urease route): step 1/1. The protein is Urease subunit beta of Sporosarcina pasteurii (Bacillus pasteurii).